Consider the following 100-residue polypeptide: Urease subunit gamma (100 aa).

Belongs to the urease gamma subunit family. As to quaternary structure, heterotrimer of UreA (gamma), UreB (beta) and UreC (alpha) subunits. Three heterotrimers associate to form the active enzyme.

The protein resides in the cytoplasm. It carries out the reaction urea + 2 H2O + H(+) = hydrogencarbonate + 2 NH4(+). It participates in nitrogen metabolism; urea degradation; CO(2) and NH(3) from urea (urease route): step 1/1. The chain is Urease subunit gamma from Ralstonia pickettii (strain 12J).